Consider the following 469-residue polypeptide: Adenosylhomocysteinase (469 aa).

The substrate site is built by Thr63, Asp139, and Glu164. Position 165-167 (165-167 (TTT)) interacts with NAD(+). Residues Lys194 and Asp198 each contribute to the substrate site. NAD(+) is bound by residues Asn199, 228–233 (GYGDVG), Glu251, Asn300, 321–323 (IGH), and Asn375.

Belongs to the adenosylhomocysteinase family. NAD(+) serves as cofactor.

The protein localises to the cytoplasm. It carries out the reaction S-adenosyl-L-homocysteine + H2O = L-homocysteine + adenosine. It participates in amino-acid biosynthesis; L-homocysteine biosynthesis; L-homocysteine from S-adenosyl-L-homocysteine: step 1/1. In terms of biological role, may play a key role in the regulation of the intracellular concentration of adenosylhomocysteine. This chain is Adenosylhomocysteinase, found in Ectopseudomonas mendocina (strain ymp) (Pseudomonas mendocina).